The sequence spans 1020 residues: Neurofilament heavy polypeptide (1020 aa).

Positions Met-1 to Gln-100 are head. Positions Val-58–Gly-83 are disordered. Residues Ala-71 to Asn-82 show a composition bias toward polar residues. Phosphoserine is present on residues Ser-76 and Ser-124. One can recognise an IF rod domain in the interval Glu-97–Ile-413. Residues Leu-101–Leu-132 are coil 1A. The tract at residues Arg-133–Leu-145 is linker 1. Residues Tyr-146–Gln-244 form a coil 1B region. Positions Ile-245 to Asp-266 are linker 12. The segment at Val-267–Gln-288 is coil 2A. The segment at Ser-289–Trp-292 is linker 2. The segment at Phe-293–Ile-413 is coil 2B. A phosphoserine mark is found at Ser-347 and Ser-421. Residues Gly-414–Lys-1020 are tail. The disordered stretch occupies residues Ile-456–Lys-1020. Composition is skewed to acidic residues over residues Glu-459 to Glu-475 and Gly-483 to Glu-498. 28 positions are modified to phosphoserine: Ser-511, Ser-526, Ser-532, Ser-540, Ser-546, Ser-552, Ser-560, Ser-566, Ser-574, Ser-580, Ser-586, Ser-594, Ser-600, Ser-606, Ser-614, Ser-620, Ser-628, Ser-634, Ser-640, Ser-648, Ser-654, Ser-662, Ser-668, Ser-676, Ser-682, Ser-690, Ser-696, and Ser-704. The segment covering Ser-511 to Lys-1020 has biased composition (basic and acidic residues). 4 tandem repeats follow at residues Lys-525 to Ala-530, Lys-531 to Glu-536, Lys-539 to Val-544, and Lys-545 to Ala-550. A 30 X 6 AA repeats of K-S-P-[AEPV]-[EAK]-[AEVK] region spans residues Lys-525–Glu-826. Repeat 5 spans residues Lys-559–Ala-564. Repeat copies occupy residues Lys-573–Val-578 and Lys-579–Ala-584. A run of 2 repeats spans residues Lys-593–Ala-598 and Lys-599–Ala-604. Repeat 10 spans residues Lys-613–Ala-618. 4 consecutive repeat copies span residues Lys-627–Val-632, Lys-633–Ala-638, Lys-639–Glu-644, and Lys-647–Ala-652. Repeat copies occupy residues Lys-661–Ala-666, Lys-667–Ala-672, Lys-675–Ala-680, Lys-681–Ala-686, Lys-689–Ala-694, Lys-695–Glu-700, Lys-703–Ala-708, Lys-709–Glu-714, Lys-717–Ala-722, Lys-723–Glu-728, Lys-737–Glu-742, and Lys-745–Ala-750. Phosphoserine occurs at positions 718, 724, and 738. 2 positions are modified to phosphoserine: Ser-752 and Ser-763. Repeat 27 spans residues Lys-762–Lys-767. Phosphothreonine is present on Thr-768. 3 consecutive repeat copies span residues Lys-786–Glu-791, Lys-794–Ala-799, and Lys-821–Glu-826. Phosphoserine is present on residues Ser-787, Ser-795, Ser-822, and Ser-888.

This sequence belongs to the intermediate filament family. Forms heterodimers with NEFL; which can further hetero-oligomerize (in vitro). Forms heterodimers with INA (in vitro). There are a number of repeats of the tripeptide K-S-P, NFH is phosphorylated on a number of the serines in this motif. It is thought that phosphorylation of NFH results in the formation of interfilament cross bridges that are important in the maintenance of axonal caliber. In terms of processing, phosphorylation seems to play a major role in the functioning of the larger neurofilament polypeptides (NF-M and NF-H), the levels of phosphorylation being altered developmentally and coincidentally with a change in the neurofilament function. Post-translationally, phosphorylated in the head and rod regions by the PKC kinase PKN1, leading to the inhibition of polymerization.

It is found in the cytoplasm. It localises to the cytoskeleton. Its subcellular location is the cell projection. The protein resides in the axon. In terms of biological role, neurofilaments usually contain three intermediate filament proteins: NEFL, NEFM, and NEFH which are involved in the maintenance of neuronal caliber. NEFH has an important function in mature axons that is not subserved by the two smaller NF proteins. May additionally cooperate with the neuronal intermediate filament proteins PRPH and INA to form neuronal filamentous networks. In Homo sapiens (Human), this protein is Neurofilament heavy polypeptide (NEFH).